The primary structure comprises 208 residues: Small ribosomal subunit protein uS4 (208 aa).

The region spanning 98 to 161 is the S4 RNA-binding domain; the sequence is RRLDNVIYRM…KELEIIKESL (64 aa).

Belongs to the universal ribosomal protein uS4 family. In terms of assembly, part of the 30S ribosomal subunit. Contacts protein S5. The interaction surface between S4 and S5 is involved in control of translational fidelity.

Functionally, one of the primary rRNA binding proteins, it binds directly to 16S rRNA where it nucleates assembly of the body of the 30S subunit. With S5 and S12 plays an important role in translational accuracy. The protein is Small ribosomal subunit protein uS4 of Thermodesulfovibrio yellowstonii (strain ATCC 51303 / DSM 11347 / YP87).